Reading from the N-terminus, the 66-residue chain is Large ribosomal subunit protein bL35 (66 aa).

It belongs to the bacterial ribosomal protein bL35 family. Part of the 50S ribosomal subunit. Contacts proteins L15 and L33.

In terms of biological role, binds the 23S rRNA. The sequence is that of Large ribosomal subunit protein bL35 (rpmI) from Deinococcus radiodurans (strain ATCC 13939 / DSM 20539 / JCM 16871 / CCUG 27074 / LMG 4051 / NBRC 15346 / NCIMB 9279 / VKM B-1422 / R1).